The primary structure comprises 216 residues: Superoxide dismutase [Mn], mitochondrial (216 aa).

The transit peptide at 1–18 directs the protein to the mitochondrion; it reads MSFLNRNLSRTIKAAVRG. Residues histidine 44, histidine 92, aspartate 176, and histidine 180 each coordinate Mn(2+).

The protein belongs to the iron/manganese superoxide dismutase family. It depends on Mn(2+) as a cofactor.

It is found in the mitochondrion matrix. It carries out the reaction 2 superoxide + 2 H(+) = H2O2 + O2. Its function is as follows. Destroys superoxide anion radicals which are normally produced within the cells and which are toxic to biological systems. The polypeptide is Superoxide dismutase [Mn], mitochondrial (Sod2) (Glossina morsitans morsitans (Savannah tsetse fly)).